Here is an 82-residue protein sequence, read N- to C-terminus: Small ribosomal subunit protein bS16 (82 aa).

It belongs to the bacterial ribosomal protein bS16 family.

The protein is Small ribosomal subunit protein bS16 of Elusimicrobium minutum (strain Pei191).